A 3183-amino-acid polypeptide reads, in one-letter code: WD repeat- and FYVE domain-containing protein 4 (3183 aa).

A compositionally biased stretch (basic and acidic residues) spans 1 to 15 (MEAEDLSKTEDRPED). 4 disordered regions span residues 1–37 (MEAE…EGQS), 790–811 (AGQE…GKFK), 938–977 (KSLH…QALR), and 1828–1852 (KETT…HAAE). A compositionally biased stretch (low complexity) spans 1832–1852 (SESSRNTSSPGASAEASHAAE). The BEACH-type PH domain maps to 2383 to 2508 (LDGEKVSQKV…DRSKALKSFS (126 aa)). The 295-residue stretch at 2525-2819 (NLRKHPGFDR…QIFTKPHPSR (295 aa)) folds into the BEACH domain. The disordered stretch occupies residues 2812-2836 (FTKPHPSRNTTGKNPGPGKDASTPV). WD repeat units lie at residues 2930–2969 (LAAW…GRPR), 2979–3018 (GHTQ…RVAC), 3021–3060 (VHRE…ASIT), 3070–3108 (TCCC…MPVP), and 3150–3183 (KASP…SADG).

As to quaternary structure, interacts with HSP90AB1. Highly expressed in immune tissues, especially B lymphocytes.

Its subcellular location is the early endosome. The protein resides in the endoplasmic reticulum. Its function is as follows. Plays a critical role in the regulation of cDC1-mediated cross-presentation of viral and tumor antigens in dendritic cells. Mechanistically, acts near the plasma membrane and interacts with endosomal membranes to promote endosomal-to-cytosol antigen trafficking. Also plays a role in B-cell survival through regulation of autophagy. The sequence is that of WD repeat- and FYVE domain-containing protein 4 from Mus musculus (Mouse).